The following is a 1240-amino-acid chain: DNA excision repair protein ERCC-6-like (1240 aa).

Phosphoserine is present on Ser14. Residues 21-54 (YLRYVQEAKEAAKNGDLEESLKLFNLAKDIFPTK) form a TPR 1 repeat. The 169-residue stretch at 110-278 (SLYKDGRKGG…WSLFDFACQG (169 aa)) folds into the Helicase ATP-binding domain. Residue 123–130 (DDMGLGKT) coordinates ATP. Positions 229–232 (DEAH) match the DEAH box motif. Residues 467-631 (FLMSLLERLQ…FTKQELKELF (165 aa)) enclose the Helicase C-terminal domain. Residues 736-760 (FPSQQKKKGTEFNKPQPQPSRLLTK) form a disordered region. Residues 748–760 (NKPQPQPSRLLTK) are compositionally biased toward polar residues. Ser755 and Ser773 each carry phosphoserine. The interval 778–813 (DQSAESEPQEHSEVHDVTSLQGSHHFNSTSDAGTIA) is disordered. Polar residues predominate over residues 795-809 (TSLQGSHHFNSTSDA). Ser821 carries the phosphoserine modification. The interval 845 to 879 (QKKGLQASPGQEAPSENLGSFHYLPRESSKASLGP) is disordered. Phosphoserine is present on residues Ser966, Ser998, Ser1001, and Ser1021. The tract at residues 974–1085 (KEKSLQSPAA…EVNTSLHSRR (112 aa)) is disordered. The span at 978–998 (LQSPAANSRAKSALTLSLDSS) shows a compositional bias: polar residues. The span at 1049–1065 (SVKQFDASTPQSGSNPS) shows a compositional bias: polar residues. Thr1057 bears the Phosphothreonine mark. Phosphoserine occurs at positions 1092 and 1112. Over residues 1104-1117 (MEERLDNSSEEESE) the composition is skewed to acidic residues. Positions 1104–1185 (MEERLDNSSE…MPDPPQDLAV (82 aa)) are disordered. Residues 1135 to 1165 (EQPSGATLASGNKSSNLTMSEPTSPAPQSSP) are compositionally biased toward polar residues. A Phosphoserine modification is found at Ser1172. The stretch at 1191–1224 (YESLVARGKELKECGKIQEALNCLVKALDIKSAD) is one TPR 2 repeat.

This sequence belongs to the SNF2/RAD54 helicase family. Interacts with PLK1, which phosphorylates it. Both proteins are mutually dependent on each other for correct subcellular localization. Interacts (via N-terminal TPR repeat) with BEND3 (via BEN domains 1 and 3); the interaction is direct. Phosphorylation by PLK1 prevents the association with chromosome arms and restricts its localization to the kinetochore-centromere region. In terms of tissue distribution, expressed mainly in the neural tube and heart of 10.5 dpc embryo. Significantly down-regulated after alcohol exposure in embryonic brain and heart, but not in embryonic kidney, liver, or lung.

The protein localises to the chromosome. It localises to the centromere. Its subcellular location is the kinetochore. The catalysed reaction is ATP + H2O = ADP + phosphate + H(+). DNA helicase that acts as a tension sensor that associates with catenated DNA which is stretched under tension until it is resolved during anaphase. Functions as ATP-dependent DNA translocase. Can promote Holliday junction branch migration (in vitro). This Mus musculus (Mouse) protein is DNA excision repair protein ERCC-6-like (Ercc6l).